The sequence spans 240 residues: Phosphoribosylaminoimidazole-succinocarboxamide synthase (240 aa).

This sequence belongs to the SAICAR synthetase family.

The catalysed reaction is 5-amino-1-(5-phospho-D-ribosyl)imidazole-4-carboxylate + L-aspartate + ATP = (2S)-2-[5-amino-1-(5-phospho-beta-D-ribosyl)imidazole-4-carboxamido]succinate + ADP + phosphate + 2 H(+). Its pathway is purine metabolism; IMP biosynthesis via de novo pathway; 5-amino-1-(5-phospho-D-ribosyl)imidazole-4-carboxamide from 5-amino-1-(5-phospho-D-ribosyl)imidazole-4-carboxylate: step 1/2. The polypeptide is Phosphoribosylaminoimidazole-succinocarboxamide synthase (Wolbachia pipientis wMel).